Consider the following 338-residue polypeptide: Glyceraldehyde-3-phosphate dehydrogenase 2 (338 aa).

NAD(+)-binding positions include 13–14 (RI), Asp-35, and Arg-80. D-glyceraldehyde 3-phosphate is bound by residues 151–153 (SCT), Thr-182, 211–212 (TG), and Arg-234. Catalysis depends on Cys-152, which acts as the Nucleophile. Residue Asn-316 coordinates NAD(+).

Belongs to the glyceraldehyde-3-phosphate dehydrogenase family. As to quaternary structure, homotetramer.

It is found in the cytoplasm. The catalysed reaction is D-glyceraldehyde 3-phosphate + phosphate + NAD(+) = (2R)-3-phospho-glyceroyl phosphate + NADH + H(+). It participates in carbohydrate degradation; glycolysis; pyruvate from D-glyceraldehyde 3-phosphate: step 1/5. Its activity is regulated as follows. Inhibited by koningic acid through the interaction of cysteine residues with koningic acid even at very low concentrations. This is Glyceraldehyde-3-phosphate dehydrogenase 2 (gpd2) from Trichoderma koningii (Hypocrea koningii).